A 216-amino-acid polypeptide reads, in one-letter code: Ribosomal RNA large subunit methyltransferase E (216 aa).

Positions 67, 69, 87, 103, and 128 each coordinate S-adenosyl-L-methionine. Residue Lys-168 is the Proton acceptor of the active site.

Belongs to the class I-like SAM-binding methyltransferase superfamily. RNA methyltransferase RlmE family.

The protein localises to the cytoplasm. The enzyme catalyses uridine(2552) in 23S rRNA + S-adenosyl-L-methionine = 2'-O-methyluridine(2552) in 23S rRNA + S-adenosyl-L-homocysteine + H(+). Specifically methylates the uridine in position 2552 of 23S rRNA at the 2'-O position of the ribose in the fully assembled 50S ribosomal subunit. This Acinetobacter baylyi (strain ATCC 33305 / BD413 / ADP1) protein is Ribosomal RNA large subunit methyltransferase E.